Consider the following 142-residue polypeptide: Large ribosomal subunit protein bL21 (142 aa).

A compositionally biased stretch (basic residues) spans 74–84 (RRRQNSKRTRG). Residues 74-142 (RRRQNSKRTR…KAAAKAESAE (69 aa)) form a disordered region. The segment covering 107 to 125 (KAAEKKAPKADAAEGEAAK) has biased composition (basic and acidic residues). Over residues 126–135 (PKKAAPKKAA) the composition is skewed to basic residues.

This sequence belongs to the bacterial ribosomal protein bL21 family. In terms of assembly, part of the 50S ribosomal subunit. Contacts protein L20.

In terms of biological role, this protein binds to 23S rRNA in the presence of protein L20. The sequence is that of Large ribosomal subunit protein bL21 from Brucella melitensis biotype 2 (strain ATCC 23457).